A 562-amino-acid chain; its full sequence is Potassium voltage-gated channel subfamily V member 2 (562 aa).

A compositionally biased stretch (basic and acidic residues) spans 1–10; it reads MLKQSNERRW. Residues 1–34 form a disordered region; the sequence is MLKQSNERRWSLSYKPWSTPETEDVPNTGSNQHR. The Cytoplasmic portion of the chain corresponds to 1 to 163; that stretch reads MLKQSNERRW…TDEYFFDRDP (163 aa). A helical transmembrane segment spans residues 164–184; that stretch reads AVFQLIYNFYTSGVLLVRDEL. At 185 to 269 the chain is on the extracellular side; that stretch reads CPRSFLEELG…KPFSSVAAKA (85 aa). Residues 270–290 traverse the membrane as a helical segment; that stretch reads MGVATNLFVLISVVALALNTV. Residues 291–344 are Cytoplasmic-facing; that stretch reads EEMQHQAEQGTGGGDPRPILEHVEMLCVAFFTLEFLLRLASTPNLQRFARSALN. The helical transmembrane segment at 345-365 threads the bilayer; the sequence is LVDLVAILPFYLQLLLECFTS. Topologically, residues 366-391 are extracellular; that stretch reads EDQRHNKDSPREHDLETVGRVGKVGQ. The chain crosses the membrane as a helical; Voltage-sensor span at residues 392–412; the sequence is VLRIMRLMRIFRILKLARHST. Residues 413–427 lie on the Cytoplasmic side of the membrane; the sequence is GLRAFGFTLRQCYQQ. A helical membrane pass occupies residues 428–448; it reads VGCLMLFITMGIFSFSAAVYS. Residues 449–461 lie on the Extracellular side of the membrane; it reads VEHDVPGTNFTSI. Residue Asn457 is glycosylated (N-linked (GlcNAc...) asparagine). An intramembrane region (pore-forming) is located at residues 462-482; it reads LHAWWWAAVSISTVGYGDMYP. Positions 474-479 match the Selectivity filter motif; that stretch reads TVGYGD. Residues 483–488 are Extracellular-facing; sequence ETHLGR. The chain crosses the membrane as a helical span at residues 489–509; it reads LFAFLCIAFGIILNGMPISIL. Topologically, residues 510–562 are cytoplasmic; that stretch reads YNKFSDYYSKLKAYEYTAIRRERGKVNFMQRATKKMAECLSESHAQSTTRQEN.

It belongs to the potassium channel family. V (TC 1.A.1.2) subfamily. Kv8.2/KCNV2 sub-subfamily. Heteromultimer with KCNB1, KCNC1 and KCNF1. Does not form homomultimers.

Its subcellular location is the cell membrane. In terms of biological role, potassium channel subunit. Modulates channel activity by shifting the threshold and the half-maximal activation to more negative values. This chain is Potassium voltage-gated channel subfamily V member 2 (Kcnv2), found in Mus musculus (Mouse).